The primary structure comprises 102 residues: Small ribosomal subunit protein uS10 (102 aa).

The protein belongs to the universal ribosomal protein uS10 family. In terms of assembly, part of the 30S ribosomal subunit.

Its function is as follows. Involved in the binding of tRNA to the ribosomes. This Leptospira borgpetersenii serovar Hardjo-bovis (strain JB197) protein is Small ribosomal subunit protein uS10.